The primary structure comprises 397 residues: Ubiquitin-like modifier-activating enzyme 5 (397 aa).

5 residues coordinate ATP: glycine 77, aspartate 98, lysine 121, asparagine 144, and asparagine 178. The Zn(2+) site is built by cysteine 220 and cysteine 223. Cysteine 244 functions as the Glycyl thioester intermediate in the catalytic mechanism. Zn(2+) is bound by residues cysteine 297 and cysteine 302.

Belongs to the ubiquitin-activating E1 family. UBA5 subfamily.

Its function is as follows. E1-like enzyme which activates UFM1. This Culex quinquefasciatus (Southern house mosquito) protein is Ubiquitin-like modifier-activating enzyme 5.